The chain runs to 218 residues: Adenylate kinase (218 aa).

Residue glycine 10–threonine 15 participates in ATP binding. The interval serine 30–valine 59 is NMP. Residues threonine 31, arginine 36, glycine 57 to valine 59, glycine 85 to arginine 88, and glutamine 92 each bind AMP. Residues glycine 122–aspartate 159 form an LID region. ATP is bound by residues arginine 123 and threonine 132–tyrosine 133. Positions 156 and 167 each coordinate AMP. Glycine 203 contacts ATP.

Belongs to the adenylate kinase family. In terms of assembly, monomer.

It is found in the cytoplasm. The enzyme catalyses AMP + ATP = 2 ADP. It participates in purine metabolism; AMP biosynthesis via salvage pathway; AMP from ADP: step 1/1. Its function is as follows. Catalyzes the reversible transfer of the terminal phosphate group between ATP and AMP. Plays an important role in cellular energy homeostasis and in adenine nucleotide metabolism. This chain is Adenylate kinase, found in Polaromonas naphthalenivorans (strain CJ2).